Reading from the N-terminus, the 594-residue chain is Arrestin domain-containing protein C584.15c (594 aa).

Positions 368 to 398 are enriched in polar residues; that stretch reads NPQLQSGFTTPNLSRRNSSDFGPNSPVNIHS. Disordered regions lie at residues 368–417 and 531–594; these read NPQL…NSNA and EATR…RGVR. Low complexity predominate over residues 404-417; that stretch reads SGQQPSSPASNSNA. Over residues 534-552 the composition is skewed to polar residues; the sequence is RPSSPTESVEIPSNTTTIA. Pro residues predominate over residues 565-574; sequence PSTPAPPLPS. A Phosphoserine modification is found at Ser-584.

This sequence belongs to the arrestin family.

The polypeptide is Arrestin domain-containing protein C584.15c (Schizosaccharomyces pombe (strain 972 / ATCC 24843) (Fission yeast)).